Consider the following 243-residue polypeptide: Protein YagJ (243 aa).

The sequence is that of Protein YagJ (yagJ) from Escherichia coli (strain K12).